The following is a 283-amino-acid chain: Bifunctional protein FolD (283 aa).

NADP(+)-binding positions include 163–165, Ser-188, and Ile-229; that span reads GRS.

It belongs to the tetrahydrofolate dehydrogenase/cyclohydrolase family. In terms of assembly, homodimer.

It carries out the reaction (6R)-5,10-methylene-5,6,7,8-tetrahydrofolate + NADP(+) = (6R)-5,10-methenyltetrahydrofolate + NADPH. The catalysed reaction is (6R)-5,10-methenyltetrahydrofolate + H2O = (6R)-10-formyltetrahydrofolate + H(+). It participates in one-carbon metabolism; tetrahydrofolate interconversion. Functionally, catalyzes the oxidation of 5,10-methylenetetrahydrofolate to 5,10-methenyltetrahydrofolate and then the hydrolysis of 5,10-methenyltetrahydrofolate to 10-formyltetrahydrofolate. The chain is Bifunctional protein FolD from Campylobacter concisus (strain 13826).